A 395-amino-acid polypeptide reads, in one-letter code: NAD(P)H-quinone oxidoreductase subunit H, chloroplastic (395 aa).

This sequence belongs to the complex I 49 kDa subunit family. NDH is composed of at least 16 different subunits, 5 of which are encoded in the nucleus.

Its subcellular location is the plastid. It is found in the chloroplast thylakoid membrane. The catalysed reaction is a plastoquinone + NADH + (n+1) H(+)(in) = a plastoquinol + NAD(+) + n H(+)(out). The enzyme catalyses a plastoquinone + NADPH + (n+1) H(+)(in) = a plastoquinol + NADP(+) + n H(+)(out). In terms of biological role, NDH shuttles electrons from NAD(P)H:plastoquinone, via FMN and iron-sulfur (Fe-S) centers, to quinones in the photosynthetic chain and possibly in a chloroplast respiratory chain. The immediate electron acceptor for the enzyme in this species is believed to be plastoquinone. Couples the redox reaction to proton translocation, and thus conserves the redox energy in a proton gradient. The polypeptide is NAD(P)H-quinone oxidoreductase subunit H, chloroplastic (Chloranthus spicatus (Chulantree)).